The following is a 188-amino-acid chain: MTLGITEVKKGMVLKVEGDLYSVVKTEFVNPGKGSAFIRTKLKNLTRNSSIERTFKAAEKLESVELEKRNMTICYTEGDDIIFMDSNDFEQMPVSKEYVEDILPFLKEETPMEVTFYEGKPIGVIPPNFSILEVTYAEEGLKGDTSGTAQKRITVETGGEINVPIFVKQGDVIKIDLRDLTYVERVSK.

It belongs to the elongation factor P family.

It localises to the cytoplasm. It functions in the pathway protein biosynthesis; polypeptide chain elongation. Functionally, involved in peptide bond synthesis. Stimulates efficient translation and peptide-bond synthesis on native or reconstituted 70S ribosomes in vitro. Probably functions indirectly by altering the affinity of the ribosome for aminoacyl-tRNA, thus increasing their reactivity as acceptors for peptidyl transferase. The chain is Elongation factor P from Leptospira interrogans serogroup Icterohaemorrhagiae serovar copenhageni (strain Fiocruz L1-130).